Here is a 452-residue protein sequence, read N- to C-terminus: UPF0210 protein Cthe_0410 (452 aa).

The protein belongs to the UPF0210 family. In terms of assembly, homodimer.

In Acetivibrio thermocellus (strain ATCC 27405 / DSM 1237 / JCM 9322 / NBRC 103400 / NCIMB 10682 / NRRL B-4536 / VPI 7372) (Clostridium thermocellum), this protein is UPF0210 protein Cthe_0410.